The primary structure comprises 547 residues: Flagellar hook-associated protein 1 (547 aa).

It belongs to the flagella basal body rod proteins family.

The protein resides in the secreted. It localises to the bacterial flagellum. This is Flagellar hook-associated protein 1 (flgK) from Escherichia coli (strain K12).